Here is a 289-residue protein sequence, read N- to C-terminus: UPF0276 protein BB1291 (289 aa).

It belongs to the UPF0276 family.

In Bordetella bronchiseptica (strain ATCC BAA-588 / NCTC 13252 / RB50) (Alcaligenes bronchisepticus), this protein is UPF0276 protein BB1291.